Here is a 142-residue protein sequence, read N- to C-terminus: ATP synthase epsilon chain (142 aa).

This sequence belongs to the ATPase epsilon chain family. F-type ATPases have 2 components, CF(1) - the catalytic core - and CF(0) - the membrane proton channel. CF(1) has five subunits: alpha(3), beta(3), gamma(1), delta(1), epsilon(1). CF(0) has three main subunits: a, b and c.

The protein localises to the cell inner membrane. In terms of biological role, produces ATP from ADP in the presence of a proton gradient across the membrane. The sequence is that of ATP synthase epsilon chain from Maridesulfovibrio salexigens (strain ATCC 14822 / DSM 2638 / NCIMB 8403 / VKM B-1763) (Desulfovibrio salexigens).